Consider the following 734-residue polypeptide: Photosystem I P700 chlorophyll a apoprotein A2 (734 aa).

Transmembrane regions (helical) follow at residues 46–69 (IFASHFGQLAIIFLWTSGNLFHVA), 135–158 (LYTGALSLLILSAIFLIAGWLHLQ), 175–199 (LNHHLSGLFGVSSLAWTGHLVHVAI), 273–291 (IAHHHLAIAVVFIIAGHMY), 330–353 (LHFQLGLALASLGVITSLVAQHMY), 369–395 (AALYTHHQYIAGFIMTGAFAHGAIFLI), 417–439 (AIISHLSWASLFLGFHTLGLYVH), and 517–535 (FLVHHAIALGLHTTTLILV). Positions 559 and 568 each coordinate [4Fe-4S] cluster. The next 2 helical transmembrane spans lie at 575 to 596 (AFYSAVFWMLNTIGWVTLYWHW) and 643 to 665 (LSVWAWMFLFGHLVWAIGFMFLI). His-654, Met-662, and Tyr-670 together coordinate chlorophyll a. A phylloquinone-binding site is contributed by Trp-671. A helical transmembrane segment spans residues 707–727 (LVGLAHFSVGYIFTYAAFLIA).

Belongs to the PsaA/PsaB family. In terms of assembly, the PsaA/B heterodimer binds the P700 chlorophyll special pair and subsequent electron acceptors. PSI consists of a core antenna complex that captures photons, and an electron transfer chain that converts photonic excitation into a charge separation. The eukaryotic PSI reaction center is composed of at least 11 subunits. Requires P700 is a chlorophyll a/chlorophyll a' dimer, A0 is one or more chlorophyll a, A1 is one or both phylloquinones and FX is a shared 4Fe-4S iron-sulfur center. as cofactor.

Its subcellular location is the plastid. The protein resides in the chloroplast thylakoid membrane. The catalysed reaction is reduced [plastocyanin] + hnu + oxidized [2Fe-2S]-[ferredoxin] = oxidized [plastocyanin] + reduced [2Fe-2S]-[ferredoxin]. In terms of biological role, psaA and PsaB bind P700, the primary electron donor of photosystem I (PSI), as well as the electron acceptors A0, A1 and FX. PSI is a plastocyanin-ferredoxin oxidoreductase, converting photonic excitation into a charge separation, which transfers an electron from the donor P700 chlorophyll pair to the spectroscopically characterized acceptors A0, A1, FX, FA and FB in turn. Oxidized P700 is reduced on the lumenal side of the thylakoid membrane by plastocyanin. The protein is Photosystem I P700 chlorophyll a apoprotein A2 of Huperzia lucidula (Shining clubmoss).